The primary structure comprises 203 residues: Small ribosomal subunit protein uS4 (203 aa).

The S4 RNA-binding domain maps to arginine 93 to valine 156.

This sequence belongs to the universal ribosomal protein uS4 family. As to quaternary structure, part of the 30S ribosomal subunit. Contacts protein S5. The interaction surface between S4 and S5 is involved in control of translational fidelity.

In terms of biological role, one of the primary rRNA binding proteins, it binds directly to 16S rRNA where it nucleates assembly of the body of the 30S subunit. Functionally, with S5 and S12 plays an important role in translational accuracy. The polypeptide is Small ribosomal subunit protein uS4 (Streptococcus sanguinis (strain SK36)).